The primary structure comprises 352 residues: MQSMPDSTRHPPLSYCKAGVDIEKAADLVEAIKPIAKRTRRPGVLSGIGGFGGLFELPRGYKQPVLVSGTDGVGTKLKLAVELNRHDTIGIDLVAMCVNDVITTGAEPLFFLDYYATGHLNNEQAKQILTGIGAGCELAEVALIGGETAEMPGLYRQKDYDLAGFCVGVVEKEKIIDGSRVRVGDALIGIASSGPHSNGYSLIRKILARAKIPLSQSFENKSLADGLLAPTRIYVKTIKRLFSEINVHALAHITGGGLIENVPRVLPSYTQAVIDSNGWEWPAIFHWLQKQGKVPIEEMWRTFNMGVGMVLCLDKKEVRKTLELLAALGETAWILGEIQSSSEEQPRVTITP.

Belongs to the AIR synthase family.

Its subcellular location is the cytoplasm. The catalysed reaction is 2-formamido-N(1)-(5-O-phospho-beta-D-ribosyl)acetamidine + ATP = 5-amino-1-(5-phospho-beta-D-ribosyl)imidazole + ADP + phosphate + H(+). The protein operates within purine metabolism; IMP biosynthesis via de novo pathway; 5-amino-1-(5-phospho-D-ribosyl)imidazole from N(2)-formyl-N(1)-(5-phospho-D-ribosyl)glycinamide: step 2/2. The protein is Phosphoribosylformylglycinamidine cyclo-ligase of Coxiella burnetii (strain RSA 331 / Henzerling II).